The sequence spans 470 residues: Sulfate adenylyltransferase subunit 1 (470 aa).

Residues 22–237 enclose the tr-type G domain; it reads KEVLRFITCG…LEEVPVKSEE (216 aa). The interval 31–38 is G1; that stretch reads GSVDDGKS. 31–38 is a binding site for GTP; it reads GSVDDGKS. The G2 stretch occupies residues 89–93; that stretch reads GITID. The G3 stretch occupies residues 110–113; that stretch reads DTPG. GTP contacts are provided by residues 110 to 114 and 165 to 168; these read DTPGH and NKMD. Residues 165-168 are G4; it reads NKMD. The G5 stretch occupies residues 202-204; that stretch reads SAK.

Belongs to the TRAFAC class translation factor GTPase superfamily. Classic translation factor GTPase family. CysN/NodQ subfamily. Heterodimer composed of CysD, the smaller subunit, and CysN.

It carries out the reaction sulfate + ATP + H(+) = adenosine 5'-phosphosulfate + diphosphate. It functions in the pathway sulfur metabolism; hydrogen sulfide biosynthesis; sulfite from sulfate: step 1/3. With CysD forms the ATP sulfurylase (ATPS) that catalyzes the adenylation of sulfate producing adenosine 5'-phosphosulfate (APS) and diphosphate, the first enzymatic step in sulfur assimilation pathway. APS synthesis involves the formation of a high-energy phosphoric-sulfuric acid anhydride bond driven by GTP hydrolysis by CysN coupled to ATP hydrolysis by CysD. The sequence is that of Sulfate adenylyltransferase subunit 1 from Methylorubrum populi (strain ATCC BAA-705 / NCIMB 13946 / BJ001) (Methylobacterium populi).